A 502-amino-acid chain; its full sequence is Cytochrome P450 CYP94D109 (502 aa).

The chain crosses the membrane as a helical span at residues 3–23; it reads SLSLIFISFITLIVFLVVSAS. Position 437 (cysteine 437) interacts with heme.

The protein belongs to the cytochrome P450 family. In terms of tissue distribution, mainly expressed in leaves and, at low levels, in roots, fruits and stems.

The protein resides in the membrane. Its pathway is steroid metabolism; cholesterol metabolism. Involved in the biosynthesis of spiroketal steroid and saponin natural products from cholesterol such as diosgenin and analogs (e.g. furostanol and spirostanol), plant defense compounds used as main precursors for the industrial production of steroid hormones. During the 5,6-spiroketalization of cholesterol, may catalyze the 27-monohydroxylation of furostanol-type steroid to an intermediate product that undergoes a stereospecific formation of the terminal heterocycle to yield diosgenin. This is Cytochrome P450 CYP94D109 from Paris polyphylla (Daiswa polyphylla).